We begin with the raw amino-acid sequence, 131 residues long: Large ribosomal subunit protein bL17 (131 aa).

Belongs to the bacterial ribosomal protein bL17 family. As to quaternary structure, part of the 50S ribosomal subunit. Contacts protein L32.

The sequence is that of Large ribosomal subunit protein bL17 from Shewanella violacea (strain JCM 10179 / CIP 106290 / LMG 19151 / DSS12).